The following is a 557-amino-acid chain: Ribonuclease J 2 (557 aa).

Zn(2+) contacts are provided by His-76, His-78, His-144, and Glu-166. 366 to 370 (HASSH) is a substrate binding site.

It belongs to the metallo-beta-lactamase superfamily. RNA-metabolizing metallo-beta-lactamase-like family. Bacterial RNase J subfamily. Homodimer, may be a subunit of the RNA degradosome. Requires Zn(2+) as cofactor.

The protein resides in the cytoplasm. An RNase that has 5'-3' exonuclease and possibly endoonuclease activity. Involved in maturation of rRNA and in some organisms also mRNA maturation and/or decay. This is Ribonuclease J 2 from Staphylococcus saprophyticus subsp. saprophyticus (strain ATCC 15305 / DSM 20229 / NCIMB 8711 / NCTC 7292 / S-41).